The sequence spans 258 residues: Deoxyribose-phosphate aldolase (258 aa).

Residue Asp-101 is the Proton donor/acceptor of the active site. The active-site Schiff-base intermediate with acetaldehyde is Lys-166. Residue Lys-200 is the Proton donor/acceptor of the active site.

Belongs to the DeoC/FbaB aldolase family. DeoC type 2 subfamily.

It localises to the cytoplasm. The enzyme catalyses 2-deoxy-D-ribose 5-phosphate = D-glyceraldehyde 3-phosphate + acetaldehyde. Its pathway is carbohydrate degradation; 2-deoxy-D-ribose 1-phosphate degradation; D-glyceraldehyde 3-phosphate and acetaldehyde from 2-deoxy-alpha-D-ribose 1-phosphate: step 2/2. In terms of biological role, catalyzes a reversible aldol reaction between acetaldehyde and D-glyceraldehyde 3-phosphate to generate 2-deoxy-D-ribose 5-phosphate. In Actinobacillus pleuropneumoniae serotype 7 (strain AP76), this protein is Deoxyribose-phosphate aldolase.